The sequence spans 238 residues: CD63 antigen (238 aa).

Over alanine 2–lysine 11 the chain is Cytoplasmic. A helical transmembrane segment spans residues phenylalanine 12–glycine 32. Topologically, residues valine 33 to serine 51 are extracellular. Residues leucine 52 to cysteine 72 traverse the membrane as a helical segment. The Cytoplasmic segment spans residues cysteine 73–cysteine 81. A helical transmembrane segment spans residues leucine 82–isoleucine 102. Over alanine 103–valine 203 the chain is Extracellular. N-linked (GlcNAc...) asparagine glycans are attached at residues asparagine 130, asparagine 150, and asparagine 172. A helical membrane pass occupies residues leucine 204 to alanine 224. Residues cysteine 225–methionine 238 lie on the Cytoplasmic side of the membrane. The Lysosomal targeting motif motif lies at glycine 234 to methionine 238.

This sequence belongs to the tetraspanin (TM4SF) family. Interacts with TIMP1 and ITGB1 and recruits TIMP1 to ITGB1. Interacts with CD9. Identified in a complex with CD9 and ITGB3. Interacts with PMEL. Interacts with KDR/VEGFR2; identified in a complex with ITGB1 and KDR/VEGFR2 and is required to recruit KDR to ITGB1 complexes. Interacts with SYT7. Palmitoylated at a low, basal level in unstimulated platelets. The level of palmitoylation increases when platelets are activated by thrombin (in vitro). In terms of tissue distribution, detected in platelets (at protein level). Dysplastic nevi, radial growth phase primary melanomas, hematopoietic cells, tissue macrophages.

Its subcellular location is the cell membrane. The protein resides in the lysosome membrane. The protein localises to the late endosome membrane. It is found in the endosome. It localises to the multivesicular body. Its subcellular location is the melanosome. The protein resides in the secreted. The protein localises to the extracellular exosome. It is found in the cell surface. Its function is as follows. Functions as a cell surface receptor for TIMP1 and plays a role in the activation of cellular signaling cascades. Plays a role in the activation of ITGB1 and integrin signaling, leading to the activation of AKT, FAK/PTK2 and MAP kinases. Promotes cell survival, reorganization of the actin cytoskeleton, cell adhesion, spreading and migration, via its role in the activation of AKT and FAK/PTK2. Plays a role in VEGFA signaling via its role in regulating the internalization of KDR/VEGFR2. Plays a role in intracellular vesicular transport processes, and is required for normal trafficking of the PMEL luminal domain that is essential for the development and maturation of melanocytes. Plays a role in the adhesion of leukocytes onto endothelial cells via its role in the regulation of SELP trafficking. May play a role in mast cell degranulation in response to Ms4a2/FceRI stimulation, but not in mast cell degranulation in response to other stimuli. The polypeptide is CD63 antigen (CD63) (Homo sapiens (Human)).